We begin with the raw amino-acid sequence, 586 residues long: Asparagine synthetase [glutamine-hydrolyzing] 1 (586 aa).

The active-site For GATase activity is C2. The Glutamine amidotransferase type-2 domain occupies 2 to 185 (CGILAVLGCS…PGHLYSSRER (184 aa)). Residues 50-54 (RLAIV), 75-77 (NGE), and D98 contribute to the L-glutamine site. Residues 193–516 (PTWFSESIPS…PQNSARLTVP (324 aa)) enclose the Asparagine synthetase domain. Residues L231, V267, and 341-342 (SG) each bind ATP.

The enzyme catalyses L-aspartate + L-glutamine + ATP + H2O = L-asparagine + L-glutamate + AMP + diphosphate + H(+). The protein operates within amino-acid biosynthesis; L-asparagine biosynthesis; L-asparagine from L-aspartate (L-Gln route): step 1/1. The chain is Asparagine synthetase [glutamine-hydrolyzing] 1 (AS1) from Lotus japonicus (Lotus corniculatus var. japonicus).